The sequence spans 346 residues: MKFGNIFSYQPPGESHKEVMDRFVRLGVASEELNFDTYWLEHHFTEFGLTGNLFVACANLLGRTTKLNVGTMIVLPTAHPARQMEDLLLLDQMSKGRFNFGVVRGYHKDFRVFGVTMEDSRAITEDFHTMIMDGTKTGLHTDGKNIEFPDVNVYPEAYLEKIPTCMTAESATTTWLAERGLPMVLSWIITTSEKKAQMELYNAVRDSGYSEEYIKNVDHSMTLICSVDEDGKKAEDVREFLGNWYDSYVNATNIFSESNQTRGYDYHKGQKDFVLQGHTNTKRRVDYSNDLNPVGTPEKCIEIQRDIDATGITNITLGFEANGSEEEIIASMKRFMQVAPFLKDPK.

As to quaternary structure, heterodimer of an alpha and a beta chain.

It catalyses the reaction a long-chain fatty aldehyde + FMNH2 + O2 = a long-chain fatty acid + hnu + FMN + H2O + 2 H(+). Its function is as follows. Light-emitting reaction in luminous bacteria. This Photobacterium phosphoreum protein is Alkanal monooxygenase alpha chain (luxA).